The primary structure comprises 217 residues: Pyrophosphatase PpaX (217 aa).

Asp11 serves as the catalytic Nucleophile.

The protein belongs to the HAD-like hydrolase superfamily. PpaX family. The cofactor is Mg(2+).

It catalyses the reaction diphosphate + H2O = 2 phosphate + H(+). Hydrolyzes pyrophosphate formed during P-Ser-HPr dephosphorylation by HPrK/P. Might play a role in controlling the intracellular pyrophosphate pool. The chain is Pyrophosphatase PpaX from Listeria monocytogenes serotype 4b (strain CLIP80459).